A 531-amino-acid polypeptide reads, in one-letter code: Probable rhamnogalacturonate lyase A (531 aa).

The signal sequence occupies residues 1 to 20 (MLSKTSLLSLLSLAAGVVNA). Intrachain disulfides connect Cys50–Cys93 and Cys184–Cys193.

Belongs to the polysaccharide lyase 4 family.

The protein localises to the secreted. The catalysed reaction is Endotype eliminative cleavage of L-alpha-rhamnopyranosyl-(1-&gt;4)-alpha-D-galactopyranosyluronic acid bonds of rhamnogalacturonan I domains in ramified hairy regions of pectin leaving L-rhamnopyranose at the reducing end and 4-deoxy-4,5-unsaturated D-galactopyranosyluronic acid at the non-reducing end.. In terms of biological role, pectinolytic enzymes consist of four classes of enzymes: pectin lyase, polygalacturonase, pectin methylesterase and rhamnogalacturonase. Degrades the rhamnogalacturonan I (RG-I) backbone of pectin. This chain is Probable rhamnogalacturonate lyase A (rglA), found in Aspergillus niger (strain ATCC MYA-4892 / CBS 513.88 / FGSC A1513).